A 162-amino-acid polypeptide reads, in one-letter code: Large ribosomal subunit protein bL17 (162 aa).

The segment at 118 to 162 (RAPAAAPEAEEKGEKKAAGKAEKAPKAAKAPKAEKKPAKKAAKAE) is disordered. Residues 126–162 (AEEKGEKKAAGKAEKAPKAAKAPKAEKKPAKKAAKAE) show a composition bias toward basic and acidic residues.

The protein belongs to the bacterial ribosomal protein bL17 family. In terms of assembly, part of the 50S ribosomal subunit. Contacts protein L32.

The sequence is that of Large ribosomal subunit protein bL17 from Anaeromyxobacter dehalogenans (strain 2CP-C).